A 342-amino-acid chain; its full sequence is Methylthioribose-1-phosphate isomerase (342 aa).

Substrate contacts are provided by residues 44-46, Arg-87, and Gln-194; that span reads RGA. The Proton donor role is filled by Asp-235. 245–246 contributes to the substrate binding site; sequence NK.

It belongs to the eIF-2B alpha/beta/delta subunits family. MtnA subfamily.

The enzyme catalyses 5-(methylsulfanyl)-alpha-D-ribose 1-phosphate = 5-(methylsulfanyl)-D-ribulose 1-phosphate. It functions in the pathway amino-acid biosynthesis; L-methionine biosynthesis via salvage pathway; L-methionine from S-methyl-5-thio-alpha-D-ribose 1-phosphate: step 1/6. Functionally, catalyzes the interconversion of methylthioribose-1-phosphate (MTR-1-P) into methylthioribulose-1-phosphate (MTRu-1-P). In Acetivibrio thermocellus (strain ATCC 27405 / DSM 1237 / JCM 9322 / NBRC 103400 / NCIMB 10682 / NRRL B-4536 / VPI 7372) (Clostridium thermocellum), this protein is Methylthioribose-1-phosphate isomerase.